We begin with the raw amino-acid sequence, 445 residues long: Ribosomal protein uS12 methylthiotransferase RimO (445 aa).

In terms of domain architecture, MTTase N-terminal spans 4-119 (IKVALVSLGC…LLESIKVFLK (116 aa)). Positions 13, 48, 82, 156, 160, and 163 each coordinate [4Fe-4S] cluster. One can recognise a Radical SAM core domain in the interval 142 to 372 (TTPTYTAYVR…MILQQSISKD (231 aa)). Residues 375 to 441 (KEKIGKIYEV…EYDLIGVVYN (67 aa)) enclose the TRAM domain.

The protein belongs to the methylthiotransferase family. RimO subfamily. Requires [4Fe-4S] cluster as cofactor.

The protein resides in the cytoplasm. It catalyses the reaction L-aspartate(89)-[ribosomal protein uS12]-hydrogen + (sulfur carrier)-SH + AH2 + 2 S-adenosyl-L-methionine = 3-methylsulfanyl-L-aspartate(89)-[ribosomal protein uS12]-hydrogen + (sulfur carrier)-H + 5'-deoxyadenosine + L-methionine + A + S-adenosyl-L-homocysteine + 2 H(+). Functionally, catalyzes the methylthiolation of an aspartic acid residue of ribosomal protein uS12. The polypeptide is Ribosomal protein uS12 methylthiotransferase RimO (Clostridium botulinum (strain Loch Maree / Type A3)).